A 542-amino-acid polypeptide reads, in one-letter code: Chaperonin GroEL (542 aa).

ATP contacts are provided by residues 29-32 (TLGP), 86-90 (DGTTT), G413, 476-478 (NAA), and D492.

The protein belongs to the chaperonin (HSP60) family. In terms of assembly, forms a cylinder of 14 subunits composed of two heptameric rings stacked back-to-back. Interacts with the co-chaperonin GroES.

It localises to the cytoplasm. It catalyses the reaction ATP + H2O + a folded polypeptide = ADP + phosphate + an unfolded polypeptide.. Its function is as follows. Together with its co-chaperonin GroES, plays an essential role in assisting protein folding. The GroEL-GroES system forms a nano-cage that allows encapsulation of the non-native substrate proteins and provides a physical environment optimized to promote and accelerate protein folding. This chain is Chaperonin GroEL, found in Lactococcus lactis subsp. lactis (strain IL1403) (Streptococcus lactis).